Reading from the N-terminus, the 233-residue chain is MNFKEGEVLYFNKPLGWTSFKVVGHARYHMCRRMKVKKLKVGHAGTLDPLATGVMIVCTGKATKRIEEFQYHTKEYVATIQLGATTPSYDLEHEIDATYPTEHITRELVEKTLKTFVGEIQQIPPAFSACKVDGARAYDLARKGQEVELKPKLLVIDEIELLECNLPEIKIRVVCSKGTYIRALARDIGEALQSGAHLTGLIRTRVGDVKLEQCLDPAKFAEWIDQQDVEISD.

Catalysis depends on Asp48, which acts as the Nucleophile.

It belongs to the pseudouridine synthase TruB family. Type 1 subfamily.

It carries out the reaction uridine(55) in tRNA = pseudouridine(55) in tRNA. Responsible for synthesis of pseudouridine from uracil-55 in the psi GC loop of transfer RNAs. The sequence is that of tRNA pseudouridine synthase B from Bacteroides fragilis (strain ATCC 25285 / DSM 2151 / CCUG 4856 / JCM 11019 / LMG 10263 / NCTC 9343 / Onslow / VPI 2553 / EN-2).